Here is a 144-residue protein sequence, read N- to C-terminus: NADH-ubiquinone oxidoreductase chain 6 (144 aa).

Transmembrane regions (helical) follow at residues 1 to 21 (MVKV…INID), 25 to 45 (SSFF…MSMH), 46 to 66 (IWFS…ILVY), 79 to 99 (YMAV…VLTY), and 108 to 128 (FYYS…LFFM).

It belongs to the complex I subunit 6 family.

The protein localises to the mitochondrion membrane. The enzyme catalyses a ubiquinone + NADH + 5 H(+)(in) = a ubiquinol + NAD(+) + 4 H(+)(out). In terms of biological role, core subunit of the mitochondrial membrane respiratory chain NADH dehydrogenase (Complex I) that is believed to belong to the minimal assembly required for catalysis. Complex I functions in the transfer of electrons from NADH to the respiratory chain. The immediate electron acceptor for the enzyme is believed to be ubiquinone. The polypeptide is NADH-ubiquinone oxidoreductase chain 6 (Caenorhabditis elegans).